We begin with the raw amino-acid sequence, 620 residues long: bZIP transcription factor 49 (620 aa).

Residues methionine 1–valine 287 are Cytoplasmic-facing. A compositionally biased stretch (polar residues) spans serine 109 to aspartate 135. The segment at serine 109–glycine 155 is disordered. Positions glutamate 172–arginine 235 constitute a bZIP domain. Residues lysine 173–lysine 205 form a basic motif region. The segment at isoleucine 211 to methionine 218 is leucine-zipper. A helical membrane pass occupies residues alanine 288–isoleucine 308. Residues serine 309–serine 620 lie on the Lumenal side of the membrane. Disordered regions lie at residues aspartate 343 to serine 364, alanine 398 to glutamine 460, and proline 505 to lysine 557. 2 N-linked (GlcNAc...) asparagine glycosylation sites follow: asparagine 351 and asparagine 363. Positions valine 352 to serine 364 are enriched in polar residues. Basic and acidic residues-rich tracts occupy residues alanine 398–lysine 409 and arginine 432–tyrosine 441. Composition is skewed to polar residues over residues glycine 447 to glutamine 460 and proline 508 to threonine 519. N-linked (GlcNAc...) asparagine glycosylation occurs at asparagine 515. The RRIL cleavage motif motif lies at arginine 526 to leucine 529. Residues asparagine 539 and asparagine 546 are each glycosylated (N-linked (GlcNAc...) asparagine). The segment covering leucine 540 to lysine 557 has biased composition (basic and acidic residues).

This sequence belongs to the bZIP family. As to quaternary structure, interacts with BZIP28.

The protein localises to the endoplasmic reticulum membrane. The protein resides in the nucleus. In terms of biological role, transcriptional activator involved in stress responses. The chain is bZIP transcription factor 49 from Arabidopsis thaliana (Mouse-ear cress).